Reading from the N-terminus, the 331-residue chain is Adenosine deaminase (331 aa).

His12 and His14 together coordinate Zn(2+). Positions 14, 16, and 170 each coordinate substrate. Residue His197 coordinates Zn(2+). Glu200 serves as the catalytic Proton donor. Residue Asp278 participates in Zn(2+) binding. Asp279 serves as a coordination point for substrate.

This sequence belongs to the metallo-dependent hydrolases superfamily. Adenosine and AMP deaminases family. Adenosine deaminase subfamily. The cofactor is Zn(2+).

The enzyme catalyses adenosine + H2O + H(+) = inosine + NH4(+). It catalyses the reaction 2'-deoxyadenosine + H2O + H(+) = 2'-deoxyinosine + NH4(+). Its function is as follows. Catalyzes the hydrolytic deamination of adenosine and 2-deoxyadenosine. This chain is Adenosine deaminase, found in Shewanella oneidensis (strain ATCC 700550 / JCM 31522 / CIP 106686 / LMG 19005 / NCIMB 14063 / MR-1).